A 1279-amino-acid polypeptide reads, in one-letter code: Botulinum-like toxin eBoNT/J (1279 aa).

A Zn(2+)-binding site is contributed by histidine 225. Residue glutamate 226 is part of the active site. Residues histidine 229 and glutamate 269 each coordinate Zn(2+). Cysteines 424 and 438 form a disulfide. Residues 435–843 (LSSCIEILED…RLTSLPVFNL (409 aa)) are translocation domain (TD). Residues 476–525 (ADTILDSTLSNYDFSKEINFTSTVPIITVEDPLETDEDVPVISEDRTVYV) are belt; not required for channel formation. Residues 860–1080 (IDIQDSEVLN…EVNRLYWKYF (221 aa)) are N-terminus of receptor binding domain (N-RBD). A C-terminus of receptor binding domain (C-RBD) region spans residues 1081–1279 (EGSYLRDVWG…IPVDEGWKED (199 aa)). Residues 1250–1253 (SAWY) carry the Host ganglioside-binding motif motif.

It belongs to the peptidase M27 family. Might be a disulfide-linked heterodimer of a light chain (LC) and heavy chain (HC). The cofactor is Zn(2+).

The protein resides in the secreted. Its subcellular location is the host cytoplasm. It localises to the host cytosol. The protein localises to the host cell membrane. It is found in the host cytoplasmic vesicle membrane. It carries out the reaction Limited hydrolysis of proteins of the neuroexocytosis apparatus, synaptobrevins, SNAP25 or syntaxin. No detected action on small molecule substrates.. Strongly resembles a botulinum-type toxin, with the appropriate domains and residues to have proteolytic function, although its C-terminus (which binds to a eukaryotic host cell) is different enough from clostrial botulinum toxins that it might bind another cell target. Might be a precursor of a toxin that binds to an unknown eukaryotic cell receptor(s), and be taken up into the host cell via the endocytic pathway. When the pH of the putative toxin-containing endosome drops a structural rearrangement occurs so that the N-terminus of the heavy chain forms pores that allows the light chain to translocate into the cytosol. Once in the cytosol the disulfide bond linking the 2 subunits is reduced and light chain cleaves its target protein. The polypeptide is Botulinum-like toxin eBoNT/J (Enterococcus sp. (strain 3G1_DIV0629)).